The chain runs to 371 residues: Macrolide export protein MacA (371 aa).

Residues 1–10 are Cytoplasmic-facing; sequence MKKRKTVKKR. Residues 11 to 31 form a helical membrane-spanning segment; sequence YVIALVIVIAGLITLWRILNA. The Periplasmic segment spans residues 32–371; sequence PVPTYQTLIV…IGEAKPGAAQ (340 aa). The stretch at 92–137 forms a coiled coil; sequence IDPEQAENQIKEVEATLMELRAQRQQAEAELKLARVTYSRQQRLAQ.

It belongs to the membrane fusion protein (MFP) (TC 8.A.1) family. In terms of assembly, homohexamer. Part of the tripartite efflux system MacAB-TolC, which is composed of an inner membrane transporter, MacB, a periplasmic membrane fusion protein, MacA, and an outer membrane component, TolC. The complex forms a large protein conduit and can translocate molecules across both the inner and outer membranes. MacA interacts with MacB and TolC.

The protein resides in the cell inner membrane. Part of the tripartite efflux system MacAB-TolC. MacA stimulates the ATPase activity of MacB by promoting the closed ATP-bound state of MacB, increases the capacity of MacB to bind macrolides such as erythromycin, and provides a physical link between MacB and TolC. Confers resistance against macrolides. This is Macrolide export protein MacA (macA) from Escherichia coli O157:H7.